The chain runs to 636 residues: Polyadenylate-binding protein 1 (636 aa).

N-acetylmethionine is present on Met1. RRM domains lie at 11 to 89, 99 to 175, 191 to 268, and 294 to 370; these read ASLY…WSQR, GNIF…RFKS, TNVY…RAQK, and VNLY…LAQR. Positions 166 to 289 are CSDE1-binding; sequence RKVFVGRFKS…FEQMKQDRIT (124 aa). Lys299 carries the post-translational modification N6-methyllysine. Ser315 is subject to Phosphoserine. Thr319 carries the post-translational modification Phosphothreonine. Omega-N-methylarginine is present on residues Arg385, Arg419, Arg432, and Arg436. Omega-N-methylated arginine; by CARM1 occurs at positions 455 and 460. An omega-N-methylarginine mark is found at Arg475 and Arg481. Asymmetric dimethylarginine; alternate is present on Arg493. Arg493 carries the post-translational modification Dimethylated arginine; alternate. Arg493 bears the Omega-N-methylarginine; alternate mark. The residue at position 506 (Arg506) is an Omega-N-methylarginine. The residue at position 512 (Lys512) is an N6-acetyllysine. An Omega-N-methylarginine modification is found at Arg518. The PABC domain maps to 542-619; sequence QEPLTASMLA…AVAVLQAHQA (78 aa).

Belongs to the polyadenylate-binding protein type-1 family. As to quaternary structure, may form homodimers. Component of a multisubunit autoregulatory ribonucleoprotein complex (ARC), at least composed of IGF2BP1, PABPC1 and CSDE1. Directly interacts with IGF2BP1. Part of a complex associated with the FOS mCRD domain and consisting of HNRPD, SYNCRIP, PAIP1 and CSDE1/UNR. Interacts with PAIP1 and PAIP2 (via the PABPC1-interacting motifs PAM1 and PAM2). Interacts with PAIP1 with a 1:1 stoichiometry and with PAIP2 with a 1:2 stoichiometry. The interaction with CSDE1 is direct and RNA-independent. Found in a mRNP complex with YBX2. Interacts with TENT2/GLD2. Identified in the spliceosome C complex. Identified in a mRNP complex, at least composed of DHX9, DDX3X, ELAVL1, HNRNPU, IGF2BP1, ILF3, PABPC1, PCBP2, PTBP2, STAU1, STAU2, SYNCRIP and YBX1. The interaction with DDX3X is direct and RNA-independent. This interaction increases in stressed cells and decreases during cell recovery. Identified in a IGF2BP1-dependent mRNP granule complex containing untranslated mRNAs. Interacts with NXF1/TAP. Interacts with PIWIL1. Interacts with AGO1, AGO2, GSPT1 and GSPT2. Interacts with LARP4B. Interacts (via the second and third RRM domains and the C-terminus) with PAIP2B (via central acidic portion and C-terminus). Forms a complex with LARP1 and SHFL. Interacts with LARP4. Interacts with ZFC3H1 in a RNase-sensitive manner. Interacts with TRIM71 (via NHL repeats) in an RNA-dependent manner. Interacts with TENT5C; the interaction has no effect on TENT5C poly(A) polymerase function. Interacts with G3BP1 and G3BP2. Interacts with ENDOV; the interaction is RNA-dependent and stimulates ENDOV activity. Interacts with UPF1; the interaction is RNA-dependent. Interacts with IGF2BP2 and IGF2BP3. May interact with SETX. Interacts with RBM46. Interacts with PAN3. Post-translationally, phosphorylated by MAPKAPK2. Methylated by CARM1. Arg-493 is dimethylated, probably to asymmetric dimethylarginine.

The protein resides in the cytoplasm. It localises to the stress granule. Its subcellular location is the nucleus. It is found in the cell projection. The protein localises to the lamellipodium. Functionally, binds the poly(A) tail of mRNA, including that of its own transcript, and regulates processes of mRNA metabolism such as pre-mRNA splicing and mRNA stability. Its function in translational initiation regulation can either be enhanced by PAIP1 or repressed by PAIP2. Can probably bind to cytoplasmic RNA sequences other than poly(A) in vivo. Binds to N6-methyladenosine (m6A)-containing mRNAs and contributes to MYC stability by binding to m6A-containing MYC mRNAs. Involved in translationally coupled mRNA turnover. Implicated with other RNA-binding proteins in the cytoplasmic deadenylation/translational and decay interplay of the FOS mRNA mediated by the major coding-region determinant of instability (mCRD) domain. Involved in regulation of nonsense-mediated decay (NMD) of mRNAs containing premature stop codons; for the recognition of premature termination codons (PTC) and initiation of NMD a competitive interaction between UPF1 and PABPC1 with the ribosome-bound release factors is proposed. By binding to long poly(A) tails, may protect them from uridylation by ZCCHC6/ZCCHC11 and hence contribute to mRNA stability. The polypeptide is Polyadenylate-binding protein 1 (PABPC1) (Pongo abelii (Sumatran orangutan)).